Consider the following 581-residue polypeptide: La-related protein 7 (581 aa).

Residue Met-1 is modified to N-acetylmethionine. Over residues 1–10 (METESGNQKN) the composition is skewed to polar residues. Disordered stretches follow at residues 1 to 28 (METE…KKKR), 188 to 368 (NPPE…ERHK), and 410 to 440 (KSES…CPTQ). The HTH La-type RNA-binding domain occupies 28–122 (RSRVKQVLAD…KPLGERPKDE (95 aa)). The region spanning 125-203 (RTVYVELLPK…PRKPGIFPKT (79 aa)) is the RRM domain. Basic residues predominate over residues 219–228 (KKKKKKKGRM). The span at 229–240 (KKEDNVQAKEEN) shows a compositional bias: basic and acidic residues. Lys-237 participates in a covalent cross-link: Glycyl lysine isopeptide (Lys-Gly) (interchain with G-Cter in SUMO2). Thr-257 bears the Phosphothreonine mark. 6 positions are modified to phosphoserine: Ser-258, Ser-261, Ser-273, Ser-298, Ser-299, and Ser-300. Over residues 316–335 (IQKDIIKEPSEASKENRDIE) the composition is skewed to basic and acidic residues. Residue Ser-337 is modified to Phosphoserine. Phosphothreonine is present on Thr-338. At Ser-351 the chain carries Phosphoserine. A compositionally biased stretch (basic residues) spans 354 to 367 (KTKRKHKKKHKERH). Lys-410 participates in a covalent cross-link: Glycyl lysine isopeptide (Lys-Gly) (interchain with G-Cter in SUMO2). In terms of domain architecture, xRRM spans 449–562 (QFVSGVIVKI…TEKLITKAEK (114 aa)).

Belongs to the LARP7 family. In terms of assembly, core component of the 7SK RNP complex, at least composed of 7SK RNA, LARP7, MEPCE, HEXIM1 (or HEXIM2) and P-TEFb (composed of CDK9 and CCNT1/cyclin-T1). Interacts with METTL16. Interacts with RBM7; upon genotoxic stress this interaction is enhanced, triggering the release of inactive P-TEFb complex from the core, yielding to P-TEFb complex activation. Associates with box C/D small nucleolar ribonucleoprotein (snoRNP) complexes.

The protein resides in the nucleus. The protein localises to the nucleoplasm. Functionally, RNA-binding protein that specifically binds distinct small nuclear RNA (snRNAs) and regulates their processing and function. Specifically binds the 7SK snRNA (7SK RNA) and acts as a core component of the 7SK ribonucleoprotein (RNP) complex, thereby acting as a negative regulator of transcription elongation by RNA polymerase II. The 7SK RNP complex sequesters the positive transcription elongation factor b (P-TEFb) in a large inactive 7SK RNP complex preventing RNA polymerase II phosphorylation and subsequent transcriptional elongation. The 7SK RNP complex also promotes snRNA gene transcription by RNA polymerase II via interaction with the little elongation complex (LEC). LARP7 specifically binds to the highly conserved 3'-terminal U-rich stretch of 7SK RNA; on stimulation, remains associated with 7SK RNA, whereas P-TEFb is released from the complex. LARP7 also acts as a regulator of mRNA splicing fidelity by promoting U6 snRNA processing. Specifically binds U6 snRNAs and associates with a subset of box C/D RNP complexes: promotes U6 snRNA 2'-O-methylation by facilitating U6 snRNA loading into box C/D RNP complexes. U6 snRNA 2'-O-methylation is required for mRNA splicing fidelity. Binds U6 snRNAs with a 5'-CAGGG-3' sequence motif. U6 snRNA processing is required for spermatogenesis. This is La-related protein 7 from Macaca fascicularis (Crab-eating macaque).